We begin with the raw amino-acid sequence, 503 residues long: Probable cytosol aminopeptidase (503 aa).

Mn(2+) is bound by residues Lys-270 and Asp-275. Lys-282 is a catalytic residue. Asp-293, Asp-352, and Glu-354 together coordinate Mn(2+). Arg-356 is an active-site residue.

Belongs to the peptidase M17 family. The cofactor is Mn(2+).

Its subcellular location is the cytoplasm. It catalyses the reaction Release of an N-terminal amino acid, Xaa-|-Yaa-, in which Xaa is preferably Leu, but may be other amino acids including Pro although not Arg or Lys, and Yaa may be Pro. Amino acid amides and methyl esters are also readily hydrolyzed, but rates on arylamides are exceedingly low.. The catalysed reaction is Release of an N-terminal amino acid, preferentially leucine, but not glutamic or aspartic acids.. Functionally, presumably involved in the processing and regular turnover of intracellular proteins. Catalyzes the removal of unsubstituted N-terminal amino acids from various peptides. This is Probable cytosol aminopeptidase from Klebsiella pneumoniae subsp. pneumoniae (strain ATCC 700721 / MGH 78578).